We begin with the raw amino-acid sequence, 254 residues long: Precorrin-3B C(17)-methyltransferase (254 aa).

The protein belongs to the precorrin methyltransferase family.

It carries out the reaction precorrin-3B + S-adenosyl-L-methionine = precorrin-4 + S-adenosyl-L-homocysteine + 3 H(+). It participates in cofactor biosynthesis; adenosylcobalamin biosynthesis; cob(II)yrinate a,c-diamide from precorrin-2 (aerobic route): step 3/10. In terms of biological role, methyltransferase that catalyzes the methylation of C-17 in precorrin-3B to form precorrin-4. The chain is Precorrin-3B C(17)-methyltransferase (cobJ) from Sinorhizobium sp.